We begin with the raw amino-acid sequence, 694 residues long: N,N-dimethylglycine/sarcosine dehydrogenase (694 aa).

This sequence in the N-terminal section; belongs to the NADH:flavin oxidoreductase/NADH oxidase family. In terms of assembly, monomer. The purified enzyme exists in the form of a monomer, dimer or polymer under non-denaturing conditions, but only the monomeric protein exhibits enzyme activity. It depends on FAD as a cofactor. The cofactor is NAD(+). NADP(+) is required as a cofactor.

It localises to the cytoplasm. It carries out the reaction oxidized 2[4Fe-4S]-[ferredoxin] + N,N-dimethylglycine + H2O = reduced 2[4Fe-4S]-[ferredoxin] + sarcosine + formaldehyde + 2 H(+). It catalyses the reaction oxidized 2[4Fe-4S]-[ferredoxin] + sarcosine + H2O = reduced 2[4Fe-4S]-[ferredoxin] + formaldehyde + glycine + 2 H(+). Its activity is regulated as follows. Ca(2+) increases the activity by 12%, while the other metal ions tested have no or slightly inhibitory effects. The chelating agent EDTA inhibits the activity by 33%. In terms of biological role, involved in degradation of glycine betaine. Catalyzes the demethylation of both N,N-dimethylglycine (DMG) and sarcosine, releasing formaldehyde and forming glycine as the final product. Does not show activity toward trimethylamine (TMA), histamine, glycine betaine (GB) or choline. The C-N bond in DMG is probably oxidized by removal of a hydride equivalent to form a labile imine intermediate, which is then spontaneously hydrolyzed in the presence of water, producing sarcosine and formaldehyde. The two protons subtracted from DMG are transferred to the non-covalently bound FAD, resulting in the reduced form of FAD, which is subsequently reoxidized by coupling with reduction of the enzyme-bound NAD(P)(+). Regeneration of NAD(P)(+) is achieved by electron transfer to the [4Fe-4S] cluster in the probable membrane-anchored ferredoxin csal_0991. This Chromohalobacter salexigens (strain ATCC BAA-138 / DSM 3043 / CIP 106854 / NCIMB 13768 / 1H11) protein is N,N-dimethylglycine/sarcosine dehydrogenase.